Here is a 251-residue protein sequence, read N- to C-terminus: Hydroxyacylglutathione hydrolase (251 aa).

Positions 53, 55, 57, 58, 110, 127, and 165 each coordinate Zn(2+).

It belongs to the metallo-beta-lactamase superfamily. Glyoxalase II family. As to quaternary structure, monomer. Zn(2+) is required as a cofactor.

It carries out the reaction an S-(2-hydroxyacyl)glutathione + H2O = a 2-hydroxy carboxylate + glutathione + H(+). It functions in the pathway secondary metabolite metabolism; methylglyoxal degradation; (R)-lactate from methylglyoxal: step 2/2. In terms of biological role, thiolesterase that catalyzes the hydrolysis of S-D-lactoyl-glutathione to form glutathione and D-lactic acid. This is Hydroxyacylglutathione hydrolase from Buchnera aphidicola subsp. Acyrthosiphon pisum (strain APS) (Acyrthosiphon pisum symbiotic bacterium).